A 222-amino-acid polypeptide reads, in one-letter code: Non-structural protein V (222 aa).

A disordered region spans residues 61–107 (ESTNHQKGSVGGGAKPKKPRPKIAIVPADDKTVPGKPIPNPLLGLDS). Residues H171, C190, C194, C206, C208, C211, C215, and C218 each coordinate Zn(2+).

Belongs to the paramyxoviruses V protein family. In terms of assembly, interacts with host DDB1, STAT2 and IFIH1/MDA5. Interacts with host RIGI regulatory protein (via CARDs domain) and host TRIM25 (via SPRY domain); these interactions prevent TRIM25-mediated ubiquitination of RIG-I and disrupts downstream RIG-I signaling.

It localises to the host cytoplasm. Plays an essential role in the inhibition of host immune response. Prevents the establishment of cellular antiviral state by blocking interferon-alpha/beta (IFN-alpha/beta) production and signaling pathway. Interacts with host IFIH1/MDA5 and DHX58/LGP2 to inhibit the transduction pathway involved in the activation of IFN-beta promoter, thus protecting the virus against cell antiviral state. Efficiently blocks type I IFN signaling following infection by behaving as a substrate receptor for CUL4-DDB1 E3 ligase complex and targeting host STAT1 for proteasomal degradation. Blocks the type I interferon signaling pathway by disrupting the RIG-I signaling pathway. This chain is Non-structural protein V (P/V), found in Parainfluenza virus 5 (strain W3) (PIV5).